The chain runs to 275 residues: Bis(5'-nucleosyl)-tetraphosphatase, symmetrical (275 aa).

Belongs to the Ap4A hydrolase family.

It catalyses the reaction P(1),P(4)-bis(5'-adenosyl) tetraphosphate + H2O = 2 ADP + 2 H(+). Functionally, hydrolyzes diadenosine 5',5'''-P1,P4-tetraphosphate to yield ADP. The protein is Bis(5'-nucleosyl)-tetraphosphatase, symmetrical of Marinomonas sp. (strain MWYL1).